Reading from the N-terminus, the 349-residue chain is Tetraacyldisaccharide 4'-kinase (349 aa).

58-65 (TAGGSGKT) provides a ligand contact to ATP.

Belongs to the LpxK family.

The catalysed reaction is a lipid A disaccharide + ATP = a lipid IVA + ADP + H(+). It functions in the pathway glycolipid biosynthesis; lipid IV(A) biosynthesis; lipid IV(A) from (3R)-3-hydroxytetradecanoyl-[acyl-carrier-protein] and UDP-N-acetyl-alpha-D-glucosamine: step 6/6. Functionally, transfers the gamma-phosphate of ATP to the 4'-position of a tetraacyldisaccharide 1-phosphate intermediate (termed DS-1-P) to form tetraacyldisaccharide 1,4'-bis-phosphate (lipid IVA). This is Tetraacyldisaccharide 4'-kinase from Shewanella amazonensis (strain ATCC BAA-1098 / SB2B).